The sequence spans 418 residues: Putative competence-damage inducible protein (418 aa).

This sequence belongs to the CinA family.

The protein is Putative competence-damage inducible protein of Streptococcus gordonii (strain Challis / ATCC 35105 / BCRC 15272 / CH1 / DL1 / V288).